Here is a 388-residue protein sequence, read N- to C-terminus: Chorismate synthase (388 aa).

Residues Arg40 and Arg46 each coordinate NADP(+). FMN is bound by residues 131 to 133, 252 to 253, Gly296, 311 to 315, and Arg337; these read RSS, NA, and KPIPT.

The protein belongs to the chorismate synthase family. Homotetramer. It depends on FMNH2 as a cofactor.

It carries out the reaction 5-O-(1-carboxyvinyl)-3-phosphoshikimate = chorismate + phosphate. The protein operates within metabolic intermediate biosynthesis; chorismate biosynthesis; chorismate from D-erythrose 4-phosphate and phosphoenolpyruvate: step 7/7. Catalyzes the anti-1,4-elimination of the C-3 phosphate and the C-6 proR hydrogen from 5-enolpyruvylshikimate-3-phosphate (EPSP) to yield chorismate, which is the branch point compound that serves as the starting substrate for the three terminal pathways of aromatic amino acid biosynthesis. This reaction introduces a second double bond into the aromatic ring system. The chain is Chorismate synthase from Limosilactobacillus fermentum (strain NBRC 3956 / LMG 18251) (Lactobacillus fermentum).